We begin with the raw amino-acid sequence, 345 residues long: KRR1 small subunit processome component homolog (345 aa).

The region spanning 125–193 is the KH domain; the sequence is DIIKIGNLVH…VRDIVLETMN (69 aa). The span at 232–245 shows a compositional bias: basic residues; the sequence is NISKRKQPKVKKQK. Disordered stretches follow at residues 232-260 and 273-329; these read NISK…ESKV and QEQK…VDVK. The stretch at 270–298 forms a coiled coil; the sequence is FLNQEQKQAKRNQERTEKQKEAAKRQDER. 2 stretches are compositionally biased toward basic and acidic residues: residues 276 to 302 and 315 to 329; these read KQAK…RNKD and LKKE…VDVK.

It belongs to the KRR1 family. Monomer. Component of the ribosomal small subunit (SSU) processome.

The protein localises to the nucleus. The protein resides in the nucleolus. Functionally, required for 40S ribosome biogenesis. Involved in nucleolar processing of pre-18S ribosomal RNA and ribosome assembly. Binds to RNA. Required for female germline development, cell viability during eye development and for survival of dividing cells and epithelial cells during early wing disk development. This Drosophila erecta (Fruit fly) protein is KRR1 small subunit processome component homolog.